A 361-amino-acid polypeptide reads, in one-letter code: 5-formaminoimidazole-4-carboxamide-1-(beta)-D-ribofuranosyl 5'-monophosphate synthetase (361 aa).

2 residues coordinate 5-amino-1-(5-phospho-beta-D-ribosyl)imidazole-4-carboxamide: histidine 27 and serine 94. The region spanning 116–348 (RAILRWEAER…MGQRIAKEIK (233 aa)) is the ATP-grasp domain. Residues 146–208 (PDDI…ANYC) and glutamate 230 contribute to the ATP site. Residue asparagine 258 participates in 5-amino-1-(5-phospho-beta-D-ribosyl)imidazole-4-carboxamide binding. Mg(2+) contacts are provided by glutamine 297 and glutamate 310.

Belongs to the phosphohexose mutase family. It depends on Mg(2+) as a cofactor. The cofactor is Mn(2+).

It carries out the reaction 5-amino-1-(5-phospho-beta-D-ribosyl)imidazole-4-carboxamide + formate + ATP = 5-formamido-1-(5-phospho-D-ribosyl)imidazole-4-carboxamide + ADP + phosphate. It functions in the pathway purine metabolism; IMP biosynthesis via de novo pathway; 5-formamido-1-(5-phospho-D-ribosyl)imidazole-4-carboxamide from 5-amino-1-(5-phospho-D-ribosyl)imidazole-4-carboxamide (formate route): step 1/1. In terms of biological role, catalyzes the ATP- and formate-dependent formylation of 5-aminoimidazole-4-carboxamide-1-beta-d-ribofuranosyl 5'-monophosphate (AICAR) to 5-formaminoimidazole-4-carboxamide-1-beta-d-ribofuranosyl 5'-monophosphate (FAICAR) in the absence of folates. The polypeptide is 5-formaminoimidazole-4-carboxamide-1-(beta)-D-ribofuranosyl 5'-monophosphate synthetase (Methanococcus maripaludis (strain C5 / ATCC BAA-1333)).